The sequence spans 361 residues: Phospho-N-acetylmuramoyl-pentapeptide-transferase (361 aa).

10 helical membrane-spanning segments follow: residues 26 to 46, 73 to 93, 98 to 118, 139 to 159, 168 to 188, 200 to 220, 237 to 257, 264 to 284, 289 to 309, and 339 to 359; these read SILA…VLIQ, TMGG…WGDL, VWLV…DDWI, IFGL…AAVT, IALP…IVGF, GLAI…AYAS, AGDL…FLWF, VFMG…IAVI, LVLV…IIQV, and VIVR…ATLK.

This sequence belongs to the glycosyltransferase 4 family. MraY subfamily. Requires Mg(2+) as cofactor.

The protein localises to the cell inner membrane. The catalysed reaction is UDP-N-acetyl-alpha-D-muramoyl-L-alanyl-gamma-D-glutamyl-meso-2,6-diaminopimeloyl-D-alanyl-D-alanine + di-trans,octa-cis-undecaprenyl phosphate = di-trans,octa-cis-undecaprenyl diphospho-N-acetyl-alpha-D-muramoyl-L-alanyl-D-glutamyl-meso-2,6-diaminopimeloyl-D-alanyl-D-alanine + UMP. It participates in cell wall biogenesis; peptidoglycan biosynthesis. Its function is as follows. Catalyzes the initial step of the lipid cycle reactions in the biosynthesis of the cell wall peptidoglycan: transfers peptidoglycan precursor phospho-MurNAc-pentapeptide from UDP-MurNAc-pentapeptide onto the lipid carrier undecaprenyl phosphate, yielding undecaprenyl-pyrophosphoryl-MurNAc-pentapeptide, known as lipid I. The chain is Phospho-N-acetylmuramoyl-pentapeptide-transferase from Xylella fastidiosa (strain M12).